Consider the following 234-residue polypeptide: LexA repressor (234 aa).

The segment at residues 41–61 is a DNA-binding region (H-T-H motif); it reads RAEIAAELGFRSPNAAEEHLK. Catalysis depends on for autocatalytic cleavage activity residues serine 152 and lysine 189.

Belongs to the peptidase S24 family. As to quaternary structure, homodimer.

The catalysed reaction is Hydrolysis of Ala-|-Gly bond in repressor LexA.. In terms of biological role, represses a number of genes involved in the response to DNA damage (SOS response), including recA and lexA. In the presence of single-stranded DNA, RecA interacts with LexA causing an autocatalytic cleavage which disrupts the DNA-binding part of LexA, leading to derepression of the SOS regulon and eventually DNA repair. This chain is LexA repressor, found in Polaromonas naphthalenivorans (strain CJ2).